Reading from the N-terminus, the 131-residue chain is Small ribosomal subunit protein uS9 (131 aa).

Belongs to the universal ribosomal protein uS9 family.

This is Small ribosomal subunit protein uS9 from Mannheimia succiniciproducens (strain KCTC 0769BP / MBEL55E).